The chain runs to 90 residues: DNA-binding protein HU-1 (90 aa).

Thr4 bears the Phosphothreonine mark. Positions 55–90 (RSARKGRNPQTGEEIEIPATKNPAFKPGKQLKDAVN) are disordered.

Belongs to the bacterial histone-like protein family. Homodimer.

Histone-like DNA-binding protein which is capable of wrapping DNA to stabilize it, and thus to prevent its denaturation under extreme environmental conditions. The chain is DNA-binding protein HU-1 (hup1) from Halalkalibacterium halodurans (strain ATCC BAA-125 / DSM 18197 / FERM 7344 / JCM 9153 / C-125) (Bacillus halodurans).